Consider the following 351-residue polypeptide: Nicotinate-nucleotide--dimethylbenzimidazole phosphoribosyltransferase (351 aa).

Residue glutamate 317 is the Proton acceptor of the active site.

The protein belongs to the CobT family.

The catalysed reaction is 5,6-dimethylbenzimidazole + nicotinate beta-D-ribonucleotide = alpha-ribazole 5'-phosphate + nicotinate + H(+). It functions in the pathway nucleoside biosynthesis; alpha-ribazole biosynthesis; alpha-ribazole from 5,6-dimethylbenzimidazole: step 1/2. Functionally, catalyzes the synthesis of alpha-ribazole-5'-phosphate from nicotinate mononucleotide (NAMN) and 5,6-dimethylbenzimidazole (DMB). The protein is Nicotinate-nucleotide--dimethylbenzimidazole phosphoribosyltransferase of Pseudomonas fluorescens (strain SBW25).